Here is a 198-residue protein sequence, read N- to C-terminus: Phosphoheptose isomerase (198 aa).

The SIS domain maps to 34–196; it reads IVEALIRGNK…DDSLFPADHG (163 aa). 49 to 51 lines the substrate pocket; it reads NGG. His-58 and Asn-62 together coordinate Zn(2+). Substrate contacts are provided by residues Asn-62, 91 to 92, 117 to 119, Ser-122, and Gln-172; these read ND and STS. Positions 172 and 180 each coordinate Zn(2+).

The protein belongs to the SIS family. GmhA subfamily. As to quaternary structure, homotetramer. Zn(2+) is required as a cofactor.

It is found in the cytoplasm. It catalyses the reaction 2 D-sedoheptulose 7-phosphate = D-glycero-alpha-D-manno-heptose 7-phosphate + D-glycero-beta-D-manno-heptose 7-phosphate. Its pathway is carbohydrate biosynthesis; D-glycero-D-manno-heptose 7-phosphate biosynthesis; D-glycero-alpha-D-manno-heptose 7-phosphate and D-glycero-beta-D-manno-heptose 7-phosphate from sedoheptulose 7-phosphate: step 1/1. Catalyzes the isomerization of sedoheptulose 7-phosphate in D-glycero-D-manno-heptose 7-phosphate. The polypeptide is Phosphoheptose isomerase (Alteromonas mediterranea (strain DSM 17117 / CIP 110805 / LMG 28347 / Deep ecotype)).